The chain runs to 168 residues: Luminal-binding protein 3 (168 aa).

Residue Asn120 is glycosylated (N-linked (GlcNAc...) asparagine). Residues 148–168 (QRSGGASGGSSSSEEDGHDEL) are disordered. The Prevents secretion from ER signature appears at 165–168 (HDEL).

The protein belongs to the heat shock protein 70 family.

Its subcellular location is the endoplasmic reticulum lumen. Its function is as follows. Probably plays a role in facilitating the assembly of multimeric protein complexes inside the ER. The protein is Luminal-binding protein 3 (BIP3) of Nicotiana tabacum (Common tobacco).